Consider the following 486-residue polypeptide: MSVTYDDSVGVEVSSDSFWEVGNYKRTVKRIDDGHRLCGDLMNCLHERARIEKAYAQQLTEWARRWRQLVEKGPQYGTVEKAWIAVMSEAERVSELHLEVKASLMNEDFEKIKNWQKEAFHKQMMGGFKETKEAEDGFRKAQKPWAKKLKEVEAAKKAHHTACKEEKLAISREANSKADPSLNPEQLKKLQDKIEKCKQDVLKTKDKYEKSLKELDQTTPQYMENMEQVFEQCQQFEEKRLRFFREVLLEVQKHLDLSNVASYKTIYRELEQSIKAADAVEDLRWFRANHGPGMAMNWPQFEEWSADLNRTLSRREKKKAVDGVTLTGINQTGDQSGQNKPGSNLSVPSNPAQSTQLQSSYNPFEDEDDTGSSISEKEDIKAKNVSSYEKTQTYPTDWSDDESNNPFSSTDANGDSNPFDEDTTSGTEVRVRALYDYEGQEHDELSFKAGDELTKIEDEDEQGWCKGRLDSGQVGLYPANYVEAIQ.

The 272-residue stretch at 11–282 (VEVSSDSFWE…SIKAADAVED (272 aa)) folds into the F-BAR domain. Positions 25–274 (KRTVKRIDDG…TIYRELEQSI (250 aa)) form a coiled coil. N6-acetyllysine is present on K53. S273 carries the phosphoserine modification. S313 carries the phosphoserine; by PKC modification. The segment at 315–426 (REKKKAVDGV…NPFDEDTTSG (112 aa)) is disordered. A compositionally biased stretch (polar residues) spans 327 to 362 (TGINQTGDQSGQNKPGSNLSVPSNPAQSTQLQSSYN). The NPF1 signature appears at 362–364 (NPF). S373 is modified (phosphoserine; by IKKB). Residues 384–396 (NVSSYEKTQTYPT) show a composition bias toward polar residues. S399 is subject to Phosphoserine. Residues 404-416 (NNPFSSTDANGDS) show a composition bias toward polar residues. Residues 405–407 (NPF) carry the NPF2 motif. An NPF3 motif is present at residues 417–419 (NPF). The 61-residue stretch at 426-486 (GTEVRVRALY…YPANYVEAIQ (61 aa)) folds into the SH3 domain. S446 bears the Phosphoserine mark.

It belongs to the PACSIN family. As to quaternary structure, homodimer. May form heterooligomers with other PACSINs. Interacts (via NPF motifs) with EHD1 (via EH domain). Interacts (via NPF motifs) with EHD2 (via EH domain); this interaction probably stabilizes the caveolae. Interacts with EHD3. Interacts (via the SH3 domain) with MICALL1. Interacts with RAC1. Interacts (via SH3 domain) with DNM1, SYN1, SYNJ1 and WASL. Interacts (via F-BAR domain) with CAV1; this interaction induces membrane tubulation. Interacts with TRPV4. Forms a complex with EHD4 and MICALL1; the complex controls CDH5 trafficking and coordinates angiogenesis. In terms of processing, phosphorylated by casein kinase 2 (CK2). Phosphorylation by PKC probably decreases the membrane binding and tubulation capacities of PACSIN2, thereby modulating the lifetime of caveolae. Widely expressed (at protein level).

Its subcellular location is the cytoplasm. The protein localises to the cytoskeleton. The protein resides in the cytoplasmic vesicle membrane. It is found in the cell projection. It localises to the ruffle membrane. Its subcellular location is the early endosome. The protein localises to the recycling endosome membrane. The protein resides in the cell membrane. It is found in the membrane. It localises to the caveola. Its subcellular location is the cell junction. The protein localises to the adherens junction. Its function is as follows. Regulates the morphogenesis and endocytosis of caveolae. Lipid-binding protein that is able to promote the tubulation of the phosphatidic acid-containing membranes it preferentially binds. Plays a role in intracellular vesicle-mediated transport. Involved in the endocytosis of cell-surface receptors like the EGF receptor, contributing to its internalization in the absence of EGF stimulus. Essential for endothelial organization in sprouting angiogenesis, modulates CDH5-based junctions. Facilitates endothelial front-rear polarity during migration by recruiting EHD4 and MICALL1 to asymmetric adherens junctions between leader and follower cells. The chain is Protein kinase C and casein kinase substrate in neurons protein 2 (Pacsin2) from Mus musculus (Mouse).